We begin with the raw amino-acid sequence, 720 residues long: Fatty acid oxidation complex subunit alpha (720 aa).

The segment at 1–189 is enoyl-CoA hydratase/isomerase; sequence MIYQGETLSV…KLGLVDAVVA (189 aa). D296 is a substrate binding site. A 3-hydroxyacyl-CoA dehydrogenase region spans residues 311 to 720; it reads QPTKKGVVLG…ESYYTQQVNA (410 aa). NAD(+) is bound by residues M324, D343, 400–402, K407, and S429; that span reads VVE. The active-site For 3-hydroxyacyl-CoA dehydrogenase activity is the H450. N453 serves as a coordination point for NAD(+). Positions 500 and 660 each coordinate substrate.

It in the N-terminal section; belongs to the enoyl-CoA hydratase/isomerase family. This sequence in the C-terminal section; belongs to the 3-hydroxyacyl-CoA dehydrogenase family. As to quaternary structure, heterotetramer of two alpha chains (FadB) and two beta chains (FadA).

The catalysed reaction is a (3S)-3-hydroxyacyl-CoA + NAD(+) = a 3-oxoacyl-CoA + NADH + H(+). It carries out the reaction a (3S)-3-hydroxyacyl-CoA = a (2E)-enoyl-CoA + H2O. It catalyses the reaction a 4-saturated-(3S)-3-hydroxyacyl-CoA = a (3E)-enoyl-CoA + H2O. The enzyme catalyses (3S)-3-hydroxybutanoyl-CoA = (3R)-3-hydroxybutanoyl-CoA. The catalysed reaction is a (3Z)-enoyl-CoA = a 4-saturated (2E)-enoyl-CoA. It carries out the reaction a (3E)-enoyl-CoA = a 4-saturated (2E)-enoyl-CoA. It participates in lipid metabolism; fatty acid beta-oxidation. Its function is as follows. Involved in the aerobic and anaerobic degradation of long-chain fatty acids via beta-oxidation cycle. Catalyzes the formation of 3-oxoacyl-CoA from enoyl-CoA via L-3-hydroxyacyl-CoA. It can also use D-3-hydroxyacyl-CoA and cis-3-enoyl-CoA as substrate. The sequence is that of Fatty acid oxidation complex subunit alpha from Photobacterium profundum (strain SS9).